Here is a 164-residue protein sequence, read N- to C-terminus: Phosphopantetheine adenylyltransferase (164 aa).

Thr-9 contacts substrate. Residues 9-10 and His-17 contribute to the ATP site; that span reads TF. Residues Lys-41, Leu-78, and Arg-92 each contribute to the substrate site. Residues 93-95, Glu-103, and 128-134 each bind ATP; these read GLR and RQAIASK.

This sequence belongs to the bacterial CoaD family. As to quaternary structure, homohexamer. Requires Mg(2+) as cofactor.

Its subcellular location is the cytoplasm. It carries out the reaction (R)-4'-phosphopantetheine + ATP + H(+) = 3'-dephospho-CoA + diphosphate. The protein operates within cofactor biosynthesis; coenzyme A biosynthesis; CoA from (R)-pantothenate: step 4/5. Reversibly transfers an adenylyl group from ATP to 4'-phosphopantetheine, yielding dephospho-CoA (dPCoA) and pyrophosphate. This chain is Phosphopantetheine adenylyltransferase, found in Paracoccus denitrificans (strain Pd 1222).